Consider the following 196-residue polypeptide: dITP/XTP pyrophosphatase (196 aa).

9-14 contributes to the substrate binding site; it reads TSNAGK. 2 residues coordinate Mg(2+): Glu39 and Asp68. Asp68 serves as the catalytic Proton acceptor. Substrate is bound by residues Ser69, 147–150, Lys170, and 175–176; these read FGYD and HR.

It belongs to the HAM1 NTPase family. In terms of assembly, homodimer. Mg(2+) serves as cofactor.

It catalyses the reaction XTP + H2O = XMP + diphosphate + H(+). It carries out the reaction dITP + H2O = dIMP + diphosphate + H(+). The enzyme catalyses ITP + H2O = IMP + diphosphate + H(+). In terms of biological role, pyrophosphatase that catalyzes the hydrolysis of nucleoside triphosphates to their monophosphate derivatives, with a high preference for the non-canonical purine nucleotides XTP (xanthosine triphosphate), dITP (deoxyinosine triphosphate) and ITP. Seems to function as a house-cleaning enzyme that removes non-canonical purine nucleotides from the nucleotide pool, thus preventing their incorporation into DNA/RNA and avoiding chromosomal lesions. The protein is dITP/XTP pyrophosphatase of Nostoc sp. (strain PCC 7120 / SAG 25.82 / UTEX 2576).